Consider the following 234-residue polypeptide: MAENHCELLSPARGGIGAGLGGGLCRRCSAGLGALAQRPGSVSKWVRLNVGGTYFLTTRQTLCRDPKSFLYRLCQADPDLDSDKDETGAYLIDRDPTYFGPVLNYLRHGKLVINKDLAEEGVLEEAEFYNITSLIKLVKDKIRERDSKTSQVPVKHVYRVLQCQEEELTQMVSTMSDGWKFEQLVSIGSSYNYGNEDQAEFLCVVSKELHNTPYGTASEPSEKAKILQERGSRM.

Alanine 2 carries the post-translational modification N-acetylalanine. Serine 10 carries the post-translational modification Phosphoserine. Positions 44-146 constitute a BTB domain; sequence KWVRLNVGGT…LVKDKIRERD (103 aa). A disordered region spans residues 213-234; the sequence is PYGTASEPSEKAKILQERGSRM. Positions 220 to 234 are enriched in basic and acidic residues; that stretch reads PSEKAKILQERGSRM.

In terms of assembly, homopentamer. Interacts (via C-terminus) with GRASP55/GORASP2. Interacts with CUL3 and with ubiquitinated proteins. Interacts with CRY1. As to quaternary structure, (Microbial infection) Interacts with adeno-associated virus 2 (AAV-2) REP proteins.

The protein localises to the cytoplasm. The protein resides in the cytosol. It is found in the nucleus. Its interaction with CUL3 suggests that it may act as a substrate adapter in some E3 ligase complex. Does not affect the function of Kv channel Kv2.1/KCNB1, Kv1.2/KCNA2, Kv4.2/KCND2 and Kv3.4/KCNC4. The protein is BTB/POZ domain-containing protein KCTD5 (KCTD5) of Homo sapiens (Human).